Consider the following 841-residue polypeptide: Putative helicase R592 (841 aa).

One can recognise a Helicase ATP-binding domain in the interval 72–309 (STFVIETNSA…RRYVNKIFGQ (238 aa)). Position 85–92 (85–92 (DKVGAGKT)) interacts with ATP. Residues 195-205 (KLPVKTTKKGG) show a composition bias toward basic residues. A disordered region spans residues 195 to 215 (KLPVKTTKKGGSKTQNKAQND). Positions 206-215 (SKTQNKAQND) are enriched in polar residues. The DEAD box signature appears at 266-269 (DEMD). Residues 413–450 (QDVDAHENRKKNIMNNIARCKTKLESIKEKINSIKDEC) are a coiled coil. The segment at 451-491 (CFICTDPFENPTIMNCCKSIFCLKCLLTTLKTVGSKCPYCR) adopts an RING-type; degenerate zinc-finger fold. Positions 531–682 (VLEQVLSYIS…WMITNPTDLN (152 aa)) constitute a Helicase C-terminal domain. Residues 678-841 (PTDLNEEPDE…KAPVRKLIKV (164 aa)) form a disordered region. The segment covering 681 to 697 (LNEEPDEESDEGSDEDV) has biased composition (acidic residues). Residues 698-725 (EKSKDKKSSDKKSSDKKKSEKKSSDKKS) are compositionally biased toward basic and acidic residues. The span at 726–749 (SNKKNSKKKTYVKPKSSKKTSQKV) shows a compositional bias: basic residues. 2 stretches are compositionally biased toward acidic residues: residues 765 to 774 (DSDDLDDSDD) and 782 to 804 (SDSD…ESEI). Basic residues-rich tracts occupy residues 809–821 (KSKK…KKNK) and 828–841 (TLKK…LIKV).

This is Putative helicase R592 from Acanthamoeba polyphaga mimivirus (APMV).